The following is a 429-amino-acid chain: MGTIAIIAAVILGISFMTFVAFFGRLPALRNTPISFLHRLIWIHLPNGILTVDRTLTNGRLTTSLTRLGRHLWYDQHPTILIFFFLLLSVGEYLYLPVAWPHFSFTHKFFGTIAILCPYIFLYLSAYTDPGVINAKTHVREMARYPYDFTLFHPGTSCETCHLLKPARSKHCSICKKCVGRMDHHCIFINNCVGANNQRWFILLLLSTAILTLYGGVLGLVIIRAKIQARFPYWTLMPWWTSTQAWNSGDLDFHRWLLLWSWGLQSGVAMGGVTLLALLTTPLVWGLLGYHLWLVYCGTTTNESMKWQDWQAEMDEGGVYKRRMAADGSREKDLKVEPAWTRWPVEAEQIMVRTEDGKPPRSSHRLPGEGEWEAVWRLKDVENLYDIGFWDNLVDVFLPYFMFKESKGRSPVDEREFGRERGRNRRRSS.

At 1–3 (MGT) the chain is on the lumenal side. Residues 4–24 (IAIIAAVILGISFMTFVAFFG) traverse the membrane as a helical segment. Topologically, residues 25–79 (RLPALRNTPISFLHRLIWIHLPNGILTVDRTLTNGRLTTSLTRLGRHLWYDQHPT) are cytoplasmic. Residues 80–100 (ILIFFFLLLSVGEYLYLPVAW) form a helical membrane-spanning segment. Residues 101–112 (PHFSFTHKFFGT) are Lumenal-facing. The chain crosses the membrane as a helical span at residues 113–133 (IAILCPYIFLYLSAYTDPGVI). At 134 to 201 (NAKTHVREMA…CVGANNQRWF (68 aa)) the chain is on the cytoplasmic side. The 51-residue stretch at 156 to 206 (TSCETCHLLKPARSKHCSICKKCVGRMDHHCIFINNCVGANNQRWFILLLL) folds into the DHHC domain. A helical membrane pass occupies residues 202–222 (ILLLLSTAILTLYGGVLGLVI). The Lumenal portion of the chain corresponds to 223–274 (IRAKIQARFPYWTLMPWWTSTQAWNSGDLDFHRWLLLWSWGLQSGVAMGGVT). The chain crosses the membrane as a helical span at residues 275–295 (LLALLTTPLVWGLLGYHLWLV). Over 296–429 (YCGTTTNESM…ERGRNRRRSS (134 aa)) the chain is Cytoplasmic. Positions 408 to 421 (GRSPVDEREFGRER) are enriched in basic and acidic residues. Residues 408-429 (GRSPVDEREFGRERGRNRRRSS) are disordered.

It belongs to the DHHC palmitoyltransferase family. SWF1 subfamily.

The protein resides in the endoplasmic reticulum membrane. The enzyme catalyses L-cysteinyl-[protein] + hexadecanoyl-CoA = S-hexadecanoyl-L-cysteinyl-[protein] + CoA. Its function is as follows. Palmitoyltransferase that targets several endosomal SNAREs. Palmitoylates the SNAREs at cysteine residues close to the cytoplasmic end of their transmembrane domain. May have a role in the cellular quality control of transmembrane domain-containing proteins. This chain is Palmitoyltransferase SWF1 (swf-1), found in Neurospora crassa (strain ATCC 24698 / 74-OR23-1A / CBS 708.71 / DSM 1257 / FGSC 987).